A 206-amino-acid polypeptide reads, in one-letter code: Large ribosomal subunit protein uL4 (206 aa).

Belongs to the universal ribosomal protein uL4 family. As to quaternary structure, part of the 50S ribosomal subunit.

Functionally, one of the primary rRNA binding proteins, this protein initially binds near the 5'-end of the 23S rRNA. It is important during the early stages of 50S assembly. It makes multiple contacts with different domains of the 23S rRNA in the assembled 50S subunit and ribosome. In terms of biological role, forms part of the polypeptide exit tunnel. This is Large ribosomal subunit protein uL4 from Rhodopseudomonas palustris (strain HaA2).